Consider the following 121-residue polypeptide: Fluoride-specific ion channel FluC 2 (121 aa).

4 consecutive transmembrane segments (helical) span residues 3 to 23 (YLFV…LSTL), 27 to 47 (SGLP…MGYL), 64 to 84 (GVTT…FELV), and 92 to 112 (IALL…FCWF). Gly-71 and Thr-74 together coordinate Na(+).

Belongs to the fluoride channel Fluc/FEX (TC 1.A.43) family.

It localises to the cell membrane. It carries out the reaction fluoride(in) = fluoride(out). With respect to regulation, na(+) is not transported, but it plays an essential structural role and its presence is essential for fluoride channel function. Its function is as follows. Fluoride-specific ion channel. Important for reducing fluoride concentration in the cell, thus reducing its toxicity. The protein is Fluoride-specific ion channel FluC 2 of Staphylococcus haemolyticus (strain JCSC1435).